The primary structure comprises 132 residues: Transmembrane protein 170B (132 aa).

The Extracellular segment spans residues 1–37; it reads MRAEGADHSMINLSVQQVLSLWAHGTVLRNLTEMWYW. An N-linked (GlcNAc...) asparagine glycan is attached at Asn12. The chain crosses the membrane as a helical span at residues 38-58; sequence IFLWALFSSLFVHGAAGVLMF. The Cytoplasmic portion of the chain corresponds to 59 to 68; the sequence is VMLQRHRQGR. Residues 69–89 traverse the membrane as a helical segment; sequence VISIIAVSIGFLASVTGAMIT. The Extracellular segment spans residues 90 to 104; sequence SAAVAGIYRVAGKNM. Residues 105–125 traverse the membrane as a helical segment; that stretch reads APLEALVWGVGQTVLTLIISF. The Cytoplasmic segment spans residues 126-132; the sequence is SRILATL.

It belongs to the TMEM170 family. As to quaternary structure, interacts with CTNNB1.

It localises to the cell membrane. The polypeptide is Transmembrane protein 170B (Mus musculus (Mouse)).